Reading from the N-terminus, the 352-residue chain is tRNA pseudouridine synthase D (352 aa).

Asp-81 functions as the Nucleophile in the catalytic mechanism. In terms of domain architecture, TRUD spans 157-303 (GVPNYFGLQR…MLHERRILRL (147 aa)).

The protein belongs to the pseudouridine synthase TruD family.

It carries out the reaction uridine(13) in tRNA = pseudouridine(13) in tRNA. Its function is as follows. Responsible for synthesis of pseudouridine from uracil-13 in transfer RNAs. The sequence is that of tRNA pseudouridine synthase D from Azotobacter vinelandii (strain DJ / ATCC BAA-1303).